The following is a 309-amino-acid chain: Homoserine kinase (309 aa).

An ATP-binding site is contributed by 91 to 101 (PIGSGLGSSAC).

It belongs to the GHMP kinase family. Homoserine kinase subfamily.

Its subcellular location is the cytoplasm. It carries out the reaction L-homoserine + ATP = O-phospho-L-homoserine + ADP + H(+). The protein operates within amino-acid biosynthesis; L-threonine biosynthesis; L-threonine from L-aspartate: step 4/5. Catalyzes the ATP-dependent phosphorylation of L-homoserine to L-homoserine phosphate. The protein is Homoserine kinase of Cronobacter sakazakii (strain ATCC BAA-894) (Enterobacter sakazakii).